The sequence spans 172 residues: Large ribosomal subunit protein bL17 (172 aa).

Residues 140–160 show a composition bias toward basic and acidic residues; sequence LKAEAKAKREEKKPAKKEEKP. The disordered stretch occupies residues 140–172; that stretch reads LKAEAKAKREEKKPAKKEEKPKKAKKEKAAASN.

It belongs to the bacterial ribosomal protein bL17 family. Part of the 50S ribosomal subunit. Contacts protein L32.

The polypeptide is Large ribosomal subunit protein bL17 (Leptospira biflexa serovar Patoc (strain Patoc 1 / Ames)).